The following is a 507-amino-acid chain: Histidine ammonia-lyase (507 aa).

A cross-link (5-imidazolinone (Ala-Gly)) is located at residues 142–144 (ASG). Ser143 carries the 2,3-didehydroalanine (Ser) modification.

This sequence belongs to the PAL/histidase family. In terms of processing, contains an active site 4-methylidene-imidazol-5-one (MIO), which is formed autocatalytically by cyclization and dehydration of residues Ala-Ser-Gly.

The protein resides in the cytoplasm. It carries out the reaction L-histidine = trans-urocanate + NH4(+). It functions in the pathway amino-acid degradation; L-histidine degradation into L-glutamate; N-formimidoyl-L-glutamate from L-histidine: step 1/3. The sequence is that of Histidine ammonia-lyase from Symbiobacterium thermophilum (strain DSM 24528 / JCM 14929 / IAM 14863 / T).